The primary structure comprises 314 residues: tRNA pseudouridine synthase B (314 aa).

Substrate is bound at residue H43. D48 serves as the catalytic Nucleophile. Residues Y76, Y179, and L200 each contribute to the substrate site.

It belongs to the pseudouridine synthase TruB family. Type 1 subfamily.

It carries out the reaction uridine(55) in tRNA = pseudouridine(55) in tRNA. Responsible for synthesis of pseudouridine from uracil-55 in the psi GC loop of transfer RNAs. This Salmonella typhi protein is tRNA pseudouridine synthase B.